The primary structure comprises 265 residues: Indole-3-glycerol phosphate synthase (265 aa).

This sequence belongs to the TrpC family.

It carries out the reaction 1-(2-carboxyphenylamino)-1-deoxy-D-ribulose 5-phosphate + H(+) = (1S,2R)-1-C-(indol-3-yl)glycerol 3-phosphate + CO2 + H2O. It participates in amino-acid biosynthesis; L-tryptophan biosynthesis; L-tryptophan from chorismate: step 4/5. The protein is Indole-3-glycerol phosphate synthase of Xanthomonas axonopodis pv. citri (strain 306).